We begin with the raw amino-acid sequence, 88 residues long: Small ribosomal subunit protein uS17 (88 aa).

The protein belongs to the universal ribosomal protein uS17 family. Part of the 30S ribosomal subunit.

One of the primary rRNA binding proteins, it binds specifically to the 5'-end of 16S ribosomal RNA. This is Small ribosomal subunit protein uS17 from Ectopseudomonas mendocina (strain ymp) (Pseudomonas mendocina).